A 219-amino-acid polypeptide reads, in one-letter code: Redox-sensing transcriptional repressor Rex (219 aa).

Residues 17-56 constitute a DNA-binding region (H-T-H motif); it reads LYYRIFKRFHRENIVKTSSKQIAEAIGIDPATVRRDFSYF. 91-96 lines the NAD(+) pocket; that stretch reads GVGNIG.

Belongs to the transcriptional regulatory Rex family. As to quaternary structure, homodimer.

The protein localises to the cytoplasm. In terms of biological role, modulates transcription in response to changes in cellular NADH/NAD(+) redox state. The protein is Redox-sensing transcriptional repressor Rex of Streptococcus thermophilus (strain ATCC BAA-491 / LMD-9).